Here is a 431-residue protein sequence, read N- to C-terminus: BEL1-like homeodomain protein 5 (431 aa).

The SR/KY domain stretch occupies residues Pro-80–Val-96. A BELL domain region spans residues Gly-128 to Ile-199. Positions Ala-228–Leu-290 form a DNA-binding region, homeobox. Residues Glu-302–Ser-312 are compositionally biased toward basic and acidic residues. The segment at Glu-302–Thr-333 is disordered. The segment covering Thr-313–Tyr-322 has biased composition (polar residues). Residues Asn-323 to Thr-333 show a composition bias toward low complexity.

The protein belongs to the TALE/BELL homeobox family. In terms of assembly, may form heterodimeric complexes with TALE/KNOX proteins. Interacts with OFP1.

The protein localises to the nucleus. This Arabidopsis thaliana (Mouse-ear cress) protein is BEL1-like homeodomain protein 5 (BLH5).